A 191-amino-acid chain; its full sequence is Peptidyl-tRNA hydrolase (191 aa).

Tyr-15 serves as a coordination point for tRNA. The Proton acceptor role is filled by His-20. Phe-66, Asn-68, and Asn-114 together coordinate tRNA.

This sequence belongs to the PTH family. In terms of assembly, monomer.

Its subcellular location is the cytoplasm. The catalysed reaction is an N-acyl-L-alpha-aminoacyl-tRNA + H2O = an N-acyl-L-amino acid + a tRNA + H(+). In terms of biological role, hydrolyzes ribosome-free peptidyl-tRNAs (with 1 or more amino acids incorporated), which drop off the ribosome during protein synthesis, or as a result of ribosome stalling. Functionally, catalyzes the release of premature peptidyl moieties from peptidyl-tRNA molecules trapped in stalled 50S ribosomal subunits, and thus maintains levels of free tRNAs and 50S ribosomes. This chain is Peptidyl-tRNA hydrolase, found in Streptococcus agalactiae serotype III (strain NEM316).